The following is a 429-amino-acid chain: Phosphoribosylamine--glycine ligase (429 aa).

The ATP-grasp domain occupies 109–316 (KDFLARHQIP…LVDLCLAACD (208 aa)). An ATP-binding site is contributed by 135 to 196 (LREKGAPIVI…EEFLDGEEAS (62 aa)). Mg(2+)-binding residues include E286 and N288.

This sequence belongs to the GARS family. As to quaternary structure, monomer. Mg(2+) is required as a cofactor. Requires Mn(2+) as cofactor.

It catalyses the reaction 5-phospho-beta-D-ribosylamine + glycine + ATP = N(1)-(5-phospho-beta-D-ribosyl)glycinamide + ADP + phosphate + H(+). The protein operates within purine metabolism; IMP biosynthesis via de novo pathway; N(1)-(5-phospho-D-ribosyl)glycinamide from 5-phospho-alpha-D-ribose 1-diphosphate: step 2/2. This Salmonella typhi protein is Phosphoribosylamine--glycine ligase.